An 803-amino-acid chain; its full sequence is Phenylalanine--tRNA ligase beta subunit (803 aa).

Residues 40–153 (ASLDRRIVVG…SSWEIGKPFA (114 aa)) enclose the tRNA-binding domain. The region spanning 400-476 (ADLQLLALRP…RLYGYNAIES (77 aa)) is the B5 domain. Residues Asp454, Asp460, Glu463, and Glu464 each contribute to the Mg(2+) site. Residues 709–801 (SRFPVVERDI…AESKLGAVIR (93 aa)) enclose the FDX-ACB domain.

The protein belongs to the phenylalanyl-tRNA synthetase beta subunit family. Type 1 subfamily. In terms of assembly, tetramer of two alpha and two beta subunits. The cofactor is Mg(2+).

It is found in the cytoplasm. It catalyses the reaction tRNA(Phe) + L-phenylalanine + ATP = L-phenylalanyl-tRNA(Phe) + AMP + diphosphate + H(+). This Chlorobium chlorochromatii (strain CaD3) protein is Phenylalanine--tRNA ligase beta subunit.